The chain runs to 400 residues: 3-phenylpropionate/cinnamic acid dioxygenase ferredoxin--NAD(+) reductase component (400 aa).

5-36 lines the FAD pocket; the sequence is TIIIVGGGQAAAMAAASLRQQGFTGELHLFSD. 146-174 is a binding site for NAD(+); it reads SVVIIGAGTIGLELAASATQRRCKVTVIE.

This sequence belongs to the bacterial ring-hydroxylating dioxygenase ferredoxin reductase family. In terms of assembly, this dioxygenase system consists of four proteins: the two subunits of the hydroxylase component (HcaE and HcaF), a ferredoxin (HcaC) and a ferredoxin reductase (HcaD). The cofactor is FAD.

It catalyses the reaction 2 reduced [2Fe-2S]-[ferredoxin] + NAD(+) + H(+) = 2 oxidized [2Fe-2S]-[ferredoxin] + NADH. It functions in the pathway aromatic compound metabolism; 3-phenylpropanoate degradation. Its function is as follows. Part of the multicomponent 3-phenylpropionate dioxygenase, that converts 3-phenylpropionic acid (PP) and cinnamic acid (CI) into 3-phenylpropionate-dihydrodiol (PP-dihydrodiol) and cinnamic acid-dihydrodiol (CI-dihydrodiol), respectively. The chain is 3-phenylpropionate/cinnamic acid dioxygenase ferredoxin--NAD(+) reductase component from Escherichia coli (strain K12 / MC4100 / BW2952).